Here is a 507-residue protein sequence, read N- to C-terminus: ATP synthase subunit alpha, chloroplastic (507 aa).

170–177 (GDRQTGKT) serves as a coordination point for ATP.

This sequence belongs to the ATPase alpha/beta chains family. As to quaternary structure, F-type ATPases have 2 components, CF(1) - the catalytic core - and CF(0) - the membrane proton channel. CF(1) has five subunits: alpha(3), beta(3), gamma(1), delta(1), epsilon(1). CF(0) has four main subunits: a, b, b' and c.

Its subcellular location is the plastid. It localises to the chloroplast thylakoid membrane. The catalysed reaction is ATP + H2O + 4 H(+)(in) = ADP + phosphate + 5 H(+)(out). Functionally, produces ATP from ADP in the presence of a proton gradient across the membrane. The alpha chain is a regulatory subunit. The chain is ATP synthase subunit alpha, chloroplastic from Amborella trichopoda.